We begin with the raw amino-acid sequence, 59 residues long: Large ribosomal subunit protein uL30 (59 aa).

This sequence belongs to the universal ribosomal protein uL30 family. As to quaternary structure, part of the 50S ribosomal subunit.

This chain is Large ribosomal subunit protein uL30, found in Pectobacterium atrosepticum (strain SCRI 1043 / ATCC BAA-672) (Erwinia carotovora subsp. atroseptica).